A 365-amino-acid chain; its full sequence is Aminomethyltransferase (365 aa).

Belongs to the GcvT family. As to quaternary structure, the glycine cleavage system is composed of four proteins: P, T, L and H.

The catalysed reaction is N(6)-[(R)-S(8)-aminomethyldihydrolipoyl]-L-lysyl-[protein] + (6S)-5,6,7,8-tetrahydrofolate = N(6)-[(R)-dihydrolipoyl]-L-lysyl-[protein] + (6R)-5,10-methylene-5,6,7,8-tetrahydrofolate + NH4(+). The glycine cleavage system catalyzes the degradation of glycine. The sequence is that of Aminomethyltransferase from Yersinia pestis bv. Antiqua (strain Antiqua).